We begin with the raw amino-acid sequence, 294 residues long: Nucleotide-binding protein CLK_2809 (294 aa).

8 to 15 serves as a coordination point for ATP; sequence GLSGAGKT. 59 to 62 contributes to the GTP binding site; the sequence is DIRG.

It belongs to the RapZ-like family.

Functionally, displays ATPase and GTPase activities. In Clostridium botulinum (strain Loch Maree / Type A3), this protein is Nucleotide-binding protein CLK_2809.